The sequence spans 488 residues: Tyrosine-protein kinase Srms (488 aa).

The 62-residue stretch at 51–112 (PFPQLFLALY…PITHVAKASP (62 aa)) folds into the SH3 domain. Residues 120 to 212 (WYFSGVSRTQ…LIQNPLLQPC (93 aa)) enclose the SH2 domain. The Protein kinase domain occupies 230 to 488 (FALGRKLGEG…KLHAIHRCHP (259 aa)). ATP-binding positions include 236 to 244 (LGEGYFGEV) and Lys-258. Asp-350 serves as the catalytic Proton acceptor. Position 380 is a phosphotyrosine; by autocatalysis (Tyr-380).

The protein belongs to the protein kinase superfamily. Tyr protein kinase family. SRC subfamily. In terms of assembly, interacts (via the SH2 and SH3 domains) with DOK1. Interacts with KHDRBS1/SAM68 and VIM. In terms of tissue distribution, highly expressed in most breast cancers (at protein level).

It localises to the cytoplasm. The enzyme catalyses L-tyrosyl-[protein] + ATP = O-phospho-L-tyrosyl-[protein] + ADP + H(+). In terms of biological role, non-receptor tyrosine-protein kinase which phosphorylates DOK1 on tyrosine residues. Also phosphorylates KHDRBS1/SAM68 and VIM on tyrosine residues. Phosphorylation of KHDRBS1 is EGF-dependent. Phosphorylates OTUB1, promoting deubiquitination of RPTOR. This chain is Tyrosine-protein kinase Srms (SRMS), found in Homo sapiens (Human).